A 471-amino-acid chain; its full sequence is Apyrase 1 (471 aa).

Residues 1–21 are Cytoplasmic-facing; sequence MTAKRAIGRHESLADKVHRHR. The chain crosses the membrane as a helical; Signal-anchor for type II membrane protein span at residues 22 to 42; it reads GLLLVISIPIVLIALVLLLMP. Residues 43–471 are Lumenal-facing; sequence GTSTSVSVIE…GSAIEAVSSP (429 aa). 72 to 82 serves as a coordination point for ATP; the sequence is VIFDAGSSGSR. The Proton acceptor role is filled by glutamate 194. 218 to 228 is an ATP binding site; it reads GVVDLGGGSVQ. N-linked (GlcNAc...) asparagine glycosylation is present at asparagine 333.

The protein belongs to the GDA1/CD39 NTPase family. Requires Ca(2+) as cofactor. As to expression, expressed in roots, root hairs, root cap, leaves, stems, trichomes, phloem throughout the plant, guard cells, filaments of young stamens, stipules, papillae of stigmas, pollen, pollen tubes and the abscission zone of siliques.

It localises to the golgi apparatus membrane. It is found in the membrane. It catalyses the reaction a ribonucleoside 5'-triphosphate + 2 H2O = a ribonucleoside 5'-phosphate + 2 phosphate + 2 H(+). In terms of biological role, catalyzes the hydrolysis of phosphoanhydride bonds of nucleoside tri- and di-phosphates. Substrate preference is ATP &gt; ADP. Functions with APY2 to reduce extracellular ATP level which is essential for pollen germination and normal plant development. Plays a role in the regulation of stomatal function by modulating extracellular ATP levels in guard cells. The chain is Apyrase 1 (APY1) from Arabidopsis thaliana (Mouse-ear cress).